The following is a 352-amino-acid chain: S-adenosylmethionine:tRNA ribosyltransferase-isomerase (352 aa).

This sequence belongs to the QueA family. As to quaternary structure, monomer.

The protein localises to the cytoplasm. It catalyses the reaction 7-aminomethyl-7-carbaguanosine(34) in tRNA + S-adenosyl-L-methionine = epoxyqueuosine(34) in tRNA + adenine + L-methionine + 2 H(+). It functions in the pathway tRNA modification; tRNA-queuosine biosynthesis. Transfers and isomerizes the ribose moiety from AdoMet to the 7-aminomethyl group of 7-deazaguanine (preQ1-tRNA) to give epoxyqueuosine (oQ-tRNA). The chain is S-adenosylmethionine:tRNA ribosyltransferase-isomerase from Solibacter usitatus (strain Ellin6076).